The sequence spans 129 residues: Short-chain dehydrogenase/reductase homolog YusR (129 aa).

It belongs to the short-chain dehydrogenases/reductases (SDR) family.

The polypeptide is Short-chain dehydrogenase/reductase homolog YusR (yusR) (Bacillus subtilis (strain 168)).